A 548-amino-acid polypeptide reads, in one-letter code: Glucose-6-phosphate isomerase (548 aa).

The active-site Proton donor is the Glu-354. Catalysis depends on residues His-385 and Lys-513.

The protein belongs to the GPI family.

It is found in the cytoplasm. It catalyses the reaction alpha-D-glucose 6-phosphate = beta-D-fructose 6-phosphate. Its pathway is carbohydrate biosynthesis; gluconeogenesis. The protein operates within carbohydrate degradation; glycolysis; D-glyceraldehyde 3-phosphate and glycerone phosphate from D-glucose: step 2/4. Catalyzes the reversible isomerization of glucose-6-phosphate to fructose-6-phosphate. The sequence is that of Glucose-6-phosphate isomerase from Marinomonas sp. (strain MWYL1).